We begin with the raw amino-acid sequence, 95 residues long: Co-chaperonin GroES (95 aa).

The span at 12-22 shows a compositional bias: basic and acidic residues; sequence VKPSPAEEKTK. The disordered stretch occupies residues 12–38; the sequence is VKPSPAEEKTKGGLYIPDSGKEKPQHG.

Belongs to the GroES chaperonin family. In terms of assembly, heptamer of 7 subunits arranged in a ring. Interacts with the chaperonin GroEL.

It is found in the cytoplasm. In terms of biological role, together with the chaperonin GroEL, plays an essential role in assisting protein folding. The GroEL-GroES system forms a nano-cage that allows encapsulation of the non-native substrate proteins and provides a physical environment optimized to promote and accelerate protein folding. GroES binds to the apical surface of the GroEL ring, thereby capping the opening of the GroEL channel. This is Co-chaperonin GroES from Chloroherpeton thalassium (strain ATCC 35110 / GB-78).